The chain runs to 245 residues: MTAPRTLVLIPARMAATRLPGKPLLDIGGVPMVVHVLRRALAANIGRVAVATDTPAIADAVRAHGGEVVMTRADHPSGSDRIHEALQTLDPQRTIETVINLQGDFPTIRPEQIGAVLAPLDDPAVDIATLAAEIHTEEESTNPNVVKVVGSHIGTTRLRALYFTRATAPWGDGPRYHHIGLYAYRRAALERFVALPPSPLEQREKLEQLRALEAGMRIDVGIVDSVPRGVDTPADLETARRVLAG.

It belongs to the KdsB family.

Its subcellular location is the cytoplasm. The catalysed reaction is 3-deoxy-alpha-D-manno-oct-2-ulosonate + CTP = CMP-3-deoxy-beta-D-manno-octulosonate + diphosphate. It participates in nucleotide-sugar biosynthesis; CMP-3-deoxy-D-manno-octulosonate biosynthesis; CMP-3-deoxy-D-manno-octulosonate from 3-deoxy-D-manno-octulosonate and CTP: step 1/1. The protein operates within bacterial outer membrane biogenesis; lipopolysaccharide biosynthesis. Functionally, activates KDO (a required 8-carbon sugar) for incorporation into bacterial lipopolysaccharide in Gram-negative bacteria. The polypeptide is 3-deoxy-manno-octulosonate cytidylyltransferase (Rhodopseudomonas palustris (strain HaA2)).